Here is a 930-residue protein sequence, read N- to C-terminus: Isoleucine--tRNA ligase (930 aa).

A 'HIGH' region motif is present at residues 57 to 67; it reads PYANGNIHVGH. Glu-554 contacts L-isoleucyl-5'-AMP. Residues 595 to 599 carry the 'KMSKS' region motif; the sequence is KMSKS. Lys-598 contacts ATP. Residues Cys-888, Cys-891, Cys-908, and Cys-911 each coordinate Zn(2+).

This sequence belongs to the class-I aminoacyl-tRNA synthetase family. IleS type 1 subfamily. In terms of assembly, monomer. The cofactor is Zn(2+).

Its subcellular location is the cytoplasm. The catalysed reaction is tRNA(Ile) + L-isoleucine + ATP = L-isoleucyl-tRNA(Ile) + AMP + diphosphate. In terms of biological role, catalyzes the attachment of isoleucine to tRNA(Ile). As IleRS can inadvertently accommodate and process structurally similar amino acids such as valine, to avoid such errors it has two additional distinct tRNA(Ile)-dependent editing activities. One activity is designated as 'pretransfer' editing and involves the hydrolysis of activated Val-AMP. The other activity is designated 'posttransfer' editing and involves deacylation of mischarged Val-tRNA(Ile). The polypeptide is Isoleucine--tRNA ligase (Streptococcus pneumoniae (strain ATCC BAA-255 / R6)).